The following is a 259-amino-acid chain: NAP1-related protein 1 (259 aa).

Residues 1–15 (MAAAEQKGKKPRTDG) are compositionally biased toward basic and acidic residues. The interval 1–20 (MAAAEQKGKKPRTDGAEAEP) is disordered. Residues 21 to 62 (VDAALLQSIEKLQEIQDEIEKVNEEACDKVLELEQKYNEVRR) are a coiled coil. Positions 228–259 (ELLDDDDEVSDDDDEEEDDEDQGEGEEDGEEN) are disordered.

This sequence belongs to the nucleosome assembly protein (NAP) family.

Its subcellular location is the nucleus. It localises to the cytoplasm. Functionally, acts as a histone H2A/H2B chaperone in nucleosome assembly. The chain is NAP1-related protein 1 from Oryza sativa subsp. indica (Rice).